Reading from the N-terminus, the 258-residue chain is Proteasome subunit beta type-1 (258 aa).

It belongs to the peptidase T1B family. The 26S proteasome consists of a 20S proteasome core and two 19S regulatory subunits. The 20S proteasome core is composed of 28 subunits that are arranged in four stacked rings, resulting in a barrel-shaped structure. The two end rings are each formed by seven alpha subunits, and the two central rings are each formed by seven beta subunits. The catalytic chamber with the active sites is on the inside of the barrel.

Its subcellular location is the cytoplasm. It is found in the nucleus. In terms of biological role, non-catalytic component of the proteasome, a multicatalytic proteinase complex which is characterized by its ability to cleave peptides with Arg, Phe, Tyr, Leu, and Glu adjacent to the leaving group at neutral or slightly basic pH. The proteasome has an ATP-dependent proteolytic activity. In Caenorhabditis elegans, this protein is Proteasome subunit beta type-1 (pbs-6).